The following is a 623-amino-acid chain: Leucine aminopeptidase 2 (623 aa).

The interval 1–23 (MRRCTKNSRSTNPPRDPNTLSNY) is disordered. The segment covering 7 to 23 (NSRSTNPPRDPNTLSNY) has biased composition (polar residues). A peptide contacts are provided by residues 145-147 (QCQ) and 277-282 (PYGGME). H306 serves as a coordination point for Zn(2+). E307 serves as the catalytic Proton acceptor. Zn(2+) is bound by residues H310 and E329. Y394 acts as the Proton donor in catalysis.

The protein belongs to the peptidase M1 family. Requires Zn(2+) as cofactor.

It is found in the cytoplasm. The protein localises to the nucleus. It carries out the reaction an epoxide + H2O = an ethanediol. Its function is as follows. Aminopeptidase that preferentially cleaves di- and tripeptides. Also has low epoxide hydrolase activity (in vitro). Can hydrolyze the epoxide leukotriene LTA(4) but it forms preferentially 5,6-dihydroxy-7,9,11,14-eicosatetraenoic acid rather than the cytokine leukotriene B(4) as the product compared to the homologous mammalian enzyme (in vitro). This Ajellomyces capsulatus (strain NAm1 / WU24) (Darling's disease fungus) protein is Leucine aminopeptidase 2.